Consider the following 589-residue polypeptide: Aspartate--tRNA ligase (589 aa).

Position 174 (glutamate 174) interacts with L-aspartate. The tract at residues 198 to 201 (QLFK) is aspartate. Arginine 220 serves as a coordination point for L-aspartate. Residues 220-222 (RDE) and glutamine 229 each bind ATP. Histidine 448 provides a ligand contact to L-aspartate. Glutamate 483 serves as a coordination point for ATP. Residue arginine 490 coordinates L-aspartate. 535-538 (GIDR) is an ATP binding site.

This sequence belongs to the class-II aminoacyl-tRNA synthetase family. Type 1 subfamily. Homodimer.

It localises to the cytoplasm. The enzyme catalyses tRNA(Asp) + L-aspartate + ATP = L-aspartyl-tRNA(Asp) + AMP + diphosphate. Its function is as follows. Catalyzes the attachment of L-aspartate to tRNA(Asp) in a two-step reaction: L-aspartate is first activated by ATP to form Asp-AMP and then transferred to the acceptor end of tRNA(Asp). The sequence is that of Aspartate--tRNA ligase from Xylella fastidiosa (strain 9a5c).